The chain runs to 441 residues: Phosphoglucosamine mutase (441 aa).

Catalysis depends on Ser100, which acts as the Phosphoserine intermediate. The Mg(2+) site is built by Ser100, Asp239, Asp241, and Asp243. Ser100 is subject to Phosphoserine.

Belongs to the phosphohexose mutase family. Mg(2+) serves as cofactor. Activated by phosphorylation.

The catalysed reaction is alpha-D-glucosamine 1-phosphate = D-glucosamine 6-phosphate. In terms of biological role, catalyzes the conversion of glucosamine-6-phosphate to glucosamine-1-phosphate. In Ruthia magnifica subsp. Calyptogena magnifica, this protein is Phosphoglucosamine mutase.